The primary structure comprises 374 residues: Glyceraldehyde-3-phosphate dehydrogenase A, chloroplastic (374 aa).

A chloroplast-targeting transit peptide spans 1–34 (MAAMMQKSAFTGSAVSSKSGVRAKAARAVVDVRA). Residues 47–48 (RI), Asp-71, and Arg-116 contribute to the NADP(+) site. Cysteines 55 and 325 form a disulfide. Residues 189-191 (SCT), Thr-220, Arg-235, 248-249 (TG), and Arg-271 each bind D-glyceraldehyde 3-phosphate. Cys-190 (nucleophile) is an active-site residue. Asn-353 provides a ligand contact to NADP(+).

It belongs to the glyceraldehyde-3-phosphate dehydrogenase family. As to quaternary structure, homotetramer. Component of a complex that contains two dimers of PRK, two tetramers of GAPDH and CP12. CP12 associates with GAPDH, causing its conformation to change. This GAPDH/CP12 complex binds PRK to form a half-complex (one unit). This unit probably dimerizes due partially to interactions between the enzymes of each unit.

It localises to the plastid. It is found in the chloroplast. The catalysed reaction is D-glyceraldehyde 3-phosphate + phosphate + NADP(+) = (2R)-3-phospho-glyceroyl phosphate + NADPH + H(+). Its pathway is carbohydrate biosynthesis; Calvin cycle. This Chlamydomonas reinhardtii (Chlamydomonas smithii) protein is Glyceraldehyde-3-phosphate dehydrogenase A, chloroplastic (GAPA).